Reading from the N-terminus, the 38-residue chain is Large ribosomal subunit protein bL36 (38 aa).

This sequence belongs to the bacterial ribosomal protein bL36 family.

This chain is Large ribosomal subunit protein bL36, found in Limosilactobacillus fermentum (strain NBRC 3956 / LMG 18251) (Lactobacillus fermentum).